Here is a 397-residue protein sequence, read N- to C-terminus: Chorismate synthase (397 aa).

NADP(+) contacts are provided by Arg40 and Arg46. Residues 129 to 131, 257 to 258, Gly302, 317 to 321, and Arg343 contribute to the FMN site; these read RSS, QA, and KPISS.

This sequence belongs to the chorismate synthase family. As to quaternary structure, homotetramer. FMNH2 is required as a cofactor.

It catalyses the reaction 5-O-(1-carboxyvinyl)-3-phosphoshikimate = chorismate + phosphate. The protein operates within metabolic intermediate biosynthesis; chorismate biosynthesis; chorismate from D-erythrose 4-phosphate and phosphoenolpyruvate: step 7/7. Its function is as follows. Catalyzes the anti-1,4-elimination of the C-3 phosphate and the C-6 proR hydrogen from 5-enolpyruvylshikimate-3-phosphate (EPSP) to yield chorismate, which is the branch point compound that serves as the starting substrate for the three terminal pathways of aromatic amino acid biosynthesis. This reaction introduces a second double bond into the aromatic ring system. The polypeptide is Chorismate synthase (Chlorobaculum tepidum (strain ATCC 49652 / DSM 12025 / NBRC 103806 / TLS) (Chlorobium tepidum)).